Reading from the N-terminus, the 62-residue chain is Keratin-associated protein 8-1 (62 aa).

Positions Gly-12–Cys-53 are 12 X 2 AA repeats of G-[YCGS].

The protein belongs to the KRTAP type 8 family. As to quaternary structure, interacts with wool keratins. Wool.

In terms of biological role, in the wool cortex, wool keratin intermediate filaments are embedded in an interfilamentous matrix, consisting of hair keratin-associated proteins (KRTAP), which are essential for the formation of a rigid and resistant wool shaft through their extensive disulfide bond cross-linking with abundant cysteine residues of wool keratins. The matrix proteins include the high-sulfur and high-glycine-tyrosine keratins. The protein is Keratin-associated protein 8-1 (KRTAP8-1) of Ovis aries (Sheep).